We begin with the raw amino-acid sequence, 333 residues long: Glyceraldehyde-3-phosphate dehydrogenase (333 aa).

Residues 11 to 12 (RI), aspartate 35, methionine 79, and serine 121 contribute to the NAD(+) site. D-glyceraldehyde 3-phosphate is bound by residues 150 to 152 (SCT), threonine 181, 210 to 211 (TG), and arginine 233. Cysteine 151 functions as the Nucleophile in the catalytic mechanism. An NAD(+)-binding site is contributed by asparagine 315.

Belongs to the glyceraldehyde-3-phosphate dehydrogenase family. Homotetramer.

It localises to the cytoplasm. The catalysed reaction is D-glyceraldehyde 3-phosphate + phosphate + NAD(+) = (2R)-3-phospho-glyceroyl phosphate + NADH + H(+). The protein operates within carbohydrate degradation; glycolysis; pyruvate from D-glyceraldehyde 3-phosphate: step 1/5. Catalyzes the oxidative phosphorylation of glyceraldehyde 3-phosphate (G3P) to 1,3-bisphosphoglycerate (BPG) using the cofactor NAD. The first reaction step involves the formation of a hemiacetal intermediate between G3P and a cysteine residue, and this hemiacetal intermediate is then oxidized to a thioester, with concomitant reduction of NAD to NADH. The reduced NADH is then exchanged with the second NAD, and the thioester is attacked by a nucleophilic inorganic phosphate to produce BPG. This is Glyceraldehyde-3-phosphate dehydrogenase (gap) from Bacteroides fragilis (strain YCH46).